A 157-amino-acid chain; its full sequence is Isotocin-neurophysin IT 1 (157 aa).

The signal sequence occupies residues 1–20 (MFGTSVSALCLLFLLSVCTA). Cysteine 21 and cysteine 26 are oxidised to a cystine. Glycine amide is present on glycine 29. Cystine bridges form between cysteine 42-cysteine 86, cysteine 45-cysteine 59, cysteine 53-cysteine 76, cysteine 60-cysteine 66, cysteine 93-cysteine 106, cysteine 100-cysteine 118, and cysteine 107-cysteine 112.

Belongs to the vasopressin/oxytocin family. Post-translationally, seven disulfide bonds are present in neurophysin.

The protein resides in the secreted. Functionally, isotocin causes contraction of smooth muscles. This chain is Isotocin-neurophysin IT 1, found in Oncorhynchus masou (Cherry salmon).